The sequence spans 488 residues: 3-octaprenyl-4-hydroxybenzoate carboxy-lyase (488 aa).

Asn-172 serves as a coordination point for Mn(2+). Residues 175–177, 189–191, and 194–195 each bind prenylated FMN; these read IYR, RWL, and RG. Glu-238 provides a ligand contact to Mn(2+). Asp-287 (proton donor) is an active-site residue.

The protein belongs to the UbiD family. As to quaternary structure, homohexamer. Prenylated FMN is required as a cofactor. It depends on Mn(2+) as a cofactor.

It localises to the cell membrane. It catalyses the reaction a 4-hydroxy-3-(all-trans-polyprenyl)benzoate + H(+) = a 2-(all-trans-polyprenyl)phenol + CO2. Its pathway is cofactor biosynthesis; ubiquinone biosynthesis. Catalyzes the decarboxylation of 3-octaprenyl-4-hydroxy benzoate to 2-octaprenylphenol, an intermediate step in ubiquinone biosynthesis. The protein is 3-octaprenyl-4-hydroxybenzoate carboxy-lyase of Pseudomonas fluorescens (strain Pf0-1).